The primary structure comprises 321 residues: Putative membrane-bound redox modulator Alx (321 aa).

Over M1–T6 the chain is Periplasmic. Residues P7–L27 form a helical membrane-spanning segment. At Q28 to A43 the chain is on the cytoplasmic side. The chain crosses the membrane as a helical span at residues W44 to V64. At Q65–L89 the chain is on the periplasmic side. Residues A90–L110 form a helical membrane-spanning segment. The Cytoplasmic portion of the chain corresponds to Q111–R113. Residues V114–S134 traverse the membrane as a helical segment. W135 is a topological domain (periplasmic). The chain crosses the membrane as a helical span at residues L136–V156. The Cytoplasmic portion of the chain corresponds to K157–G198. Residues L199–F219 form a helical membrane-spanning segment. Residues A220–P225 lie on the Periplasmic side of the membrane. The chain crosses the membrane as a helical span at residues A226–L246. Over G247–R261 the chain is Cytoplasmic. Residues F262 to I282 traverse the membrane as a helical segment. At V283–Y286 the chain is on the periplasmic side. A helical membrane pass occupies residues H287–I307. Over N308–G321 the chain is Cytoplasmic.

This sequence belongs to the TerC family.

The protein resides in the cell inner membrane. Functionally, has been proposed to be a redox modulator. The protein is Putative membrane-bound redox modulator Alx (alx) of Escherichia coli O157:H7.